The sequence spans 163 residues: 5-hydroxymethyl-dUMP N-hydrolase (163 aa).

Ala2 bears the N-acetylalanine mark. Gly16 serves as a coordination point for 5-hydroxymethyl-dUMP. Ser17 bears the Phosphoserine mark. 5-hydroxymethyl-dUMP-binding residues include Ile18, Arg19, Gly20, Ser87, Gly89, and Glu93. A Phosphoserine modification is found at Ser87. A phosphoserine mark is found at Ser112, Ser117, Ser127, and Ser158. Residue Ser117 coordinates 5-hydroxymethyl-dUMP.

As to quaternary structure, monomer and homodimer. In terms of tissue distribution, highly expressed in heart, kidney, liver and spleen. Weakly expressed in lung and skeletal muscle.

It localises to the cytoplasm. The protein localises to the nucleus. It catalyses the reaction 5-hydroxymethyl-dUMP + H2O = 5-hydroxymethyluracil + 2-deoxy-D-ribose 5-phosphate. Its function is as follows. Part of a nucleotide salvage pathway that eliminates epigenetically modified 5-hydroxymethyl-dCMP (hmdCMP) in a two-step process entailing deamination to cytotoxic 5-hydroxymethyl-dUMP (hmdUMP), followed by its hydrolysis into 5-hydroxymethyluracil (hmU) and 2-deoxy-D-ribose 5-phosphate (deoxyribosephosphate). Catalyzes the second step in that pathway, the hydrolysis of the N-glycosidic bond in hmdUMP, degrading this cytotoxic nucleotide to avoid its genomic integration. The protein is 5-hydroxymethyl-dUMP N-hydrolase of Rattus norvegicus (Rat).